A 1058-amino-acid chain; its full sequence is SIT4-associating protein SAP185 (1058 aa).

A Glycyl lysine isopeptide (Lys-Gly) (interchain with G-Cter in ubiquitin) cross-link involves residue lysine 20. Disordered regions lie at residues 34–71 (TSTE…NREE), 135–202 (SEDR…ELEE), 513–556 (NSQN…TSID), 818–862 (CQEE…DQEQ), 873–892 (TKTR…VPGE), and 934–992 (ELSD…HDYD). Residues 42-55 (DSNSTDESLESNSF) are compositionally biased toward polar residues. 2 stretches are compositionally biased toward basic and acidic residues: residues 135 to 146 (SEDRDLVRGEDK) and 153 to 175 (ENAK…TRSG). Positions 176–189 (EEEELENEENDSAS) are enriched in acidic residues. The span at 190-202 (EDTRVTLPHELEE) shows a compositional bias: basic and acidic residues. 2 stretches are compositionally biased toward acidic residues: residues 528 to 546 (ENED…DDTN) and 820 to 837 (EEEE…EDEP). Positions 838–861 (QEYRNGDSVRSKESNSSEGKRDQE) are enriched in basic and acidic residues. Positions 934–963 (ELSDGWESSPSNSIPKRASPSKNGMNSPMF) are enriched in polar residues. Residues 967–991 (FELHSPTDEFGGHKDEILSAEGHDY) show a composition bias toward basic and acidic residues.

Belongs to the SAPS family. Hyperphosphorylated in the absence of SIT4.

In terms of biological role, associates with the SIT4 phosphatase in a cell cycle dependent manner. May be directly or indirectly involved in SIT4-dependent functions in budding and in normal G1 cyclin expression. This Saccharomyces cerevisiae (strain ATCC 204508 / S288c) (Baker's yeast) protein is SIT4-associating protein SAP185 (SAP185).